The sequence spans 107 residues: U20-lycotoxin-Ls1b (107 aa).

An N-terminal signal peptide occupies residues 1 to 30 (MFSTSDQVSKMNSRILSALLILGIATCVIA). Residues 31–76 (GGFCPKSRHPQCNLSYKINDCCAQSDCRVGSVCCVEGCGNVCRAES) enclose the WAP domain. 5 cysteine pairs are disulfide-bonded: cysteine 34/cysteine 64, cysteine 42/cysteine 68, cysteine 51/cysteine 63, cysteine 52/cysteine 90, and cysteine 57/cysteine 72.

Belongs to the venom protein 11 family. 02 (wap-2) subfamily. Post-translationally, contains 5 disulfide bonds. In terms of tissue distribution, expressed by the venom gland.

The protein localises to the secreted. In terms of biological role, has antibacterial activity. In Lycosa singoriensis (Wolf spider), this protein is U20-lycotoxin-Ls1b.